The sequence spans 254 residues: Wall-associated protein (254 aa).

The disordered stretch occupies residues 25-46; sequence DRVEPKEEPPKVPQAPKRDLKP.

The protein resides in the secreted. It localises to the cell wall. In Geobacillus stearothermophilus (Bacillus stearothermophilus), this protein is Wall-associated protein (wapA').